The following is a 269-amino-acid chain: MKRSDRYSNSNEHFEHMKHEPHYNTYYQPVGKPPKKKKSKRILLKILLTILIIIALFIGIMYFLSTRDNVDELRKIENKSSFVSADNVPEYVKGAFISMEDERFYNHHGFDLKGTTRALFSTISDRDVQGGSTITQQVVKNYFYDNDRSFTRKVKELFVAHRVEKQYNKNEILSFYLNNIYFGDNQYTLEGAANHYFGTTVNKNSTTMSHITVLQSAILASKVNAPSVYNINNMSENFTQRVSTNLEKMKQQNYINETQYQQAMSQLNR.

A helical transmembrane segment spans residues 46 to 66; sequence ILLTILIIIALFIGIMYFLST.

This sequence belongs to the glycosyltransferase 51 family.

It localises to the cell membrane. It catalyses the reaction [GlcNAc-(1-&gt;4)-Mur2Ac(oyl-L-Ala-gamma-D-Glu-L-Lys-D-Ala-D-Ala)](n)-di-trans,octa-cis-undecaprenyl diphosphate + beta-D-GlcNAc-(1-&gt;4)-Mur2Ac(oyl-L-Ala-gamma-D-Glu-L-Lys-D-Ala-D-Ala)-di-trans,octa-cis-undecaprenyl diphosphate = [GlcNAc-(1-&gt;4)-Mur2Ac(oyl-L-Ala-gamma-D-Glu-L-Lys-D-Ala-D-Ala)](n+1)-di-trans,octa-cis-undecaprenyl diphosphate + di-trans,octa-cis-undecaprenyl diphosphate + H(+). The protein operates within cell wall biogenesis; peptidoglycan biosynthesis. Its function is as follows. Peptidoglycan polymerase that catalyzes glycan chain elongation using lipid-linked disaccharide-pentapeptide as the substrate. The protein is Monofunctional glycosyltransferase of Staphylococcus aureus (strain JH1).